The chain runs to 763 residues: ATP-dependent RNA helicase SUPV3L1, mitochondrial (763 aa).

The transit peptide at 1–65 (MSVNRCIYLL…RPLDTSLFIP (65 aa)) directs the protein to the mitochondrion. The segment at 39 to 58 (RRTFDKLSTRHSSSGSSRPL) is disordered. Positions 192 to 332 (EARAIQRKIV…AVDFITELMF (141 aa)) constitute a Helicase ATP-binding domain. 205–212 (GPTNSGKT) provides a ligand contact to ATP. The 166-residue stretch at 354 to 519 (HAVESLDNLK…PTAEQIEMFA (166 aa)) folds into the Helicase C-terminal domain. Disordered stretches follow at residues 679-721 (DSQP…KSSL) and 742-763 (EWAR…RKKK). The span at 680 to 697 (SQPTDTESNSSSTVPESE) shows a compositional bias: polar residues.

The protein belongs to the helicase family. Mg(2+) serves as cofactor. Mn(2+) is required as a cofactor.

Its subcellular location is the nucleus. It localises to the mitochondrion matrix. The protein resides in the mitochondrion nucleoid. The enzyme catalyses ATP + H2O = ADP + phosphate + H(+). Its function is as follows. Major helicase player in mitochondrial RNA metabolism. Component of the mitochondrial degradosome (mtEXO) complex, that degrades 3' overhang double-stranded RNA with a 3'-to-5' directionality in an ATP-dependent manner. ATPase and ATP-dependent multisubstrate helicase, able to unwind double-stranded (ds) DNA and RNA, and RNA/DNA heteroduplexes in the 5'-to-3' direction. Plays a role in the RNA surveillance system in mitochondria; regulates the stability of mature mRNAs, the removal of aberrantly formed mRNAs and the rapid degradation of non coding processing intermediates. Also implicated in recombination and chromatin maintenance pathways. May protect cells from apoptosis. Associates with mitochondrial DNA. The protein is ATP-dependent RNA helicase SUPV3L1, mitochondrial (supv3l1) of Danio rerio (Zebrafish).